The sequence spans 898 residues: Dipeptidyl peptidase 8 (898 aa).

Residues serine 755, aspartate 833, and histidine 865 each act as charge relay system in the active site.

The protein belongs to the peptidase S9B family. DPPIV subfamily. Homodimer. Forms a ternary complex with NLRP1, composed of a DPP8 homodimer, one full-length NLRP1 protein, and one cleaved C-terminus of NLRP1 (NACHT, LRR and PYD domains-containing protein 1, C-terminus). Forms a ternary complex with CARD8, composed of a DPP8 homodimer, one full-length NLRP1 protein, and one cleaved C-terminus of CARD8 (Caspase recruitment domain-containing protein 8, C-terminus). In the ternary complex, only one subunit of the DPP8 homodimer is bound to NLRP1 or CARD8. As to expression, ubiquitously expressed, with highest levels in testis, placenta, prostate, muscle and brain.

Its subcellular location is the cytoplasm. The enzyme catalyses Release of an N-terminal dipeptide, Xaa-Yaa-|-Zaa-, from a polypeptide, preferentially when Yaa is Pro, provided Zaa is neither Pro nor hydroxyproline.. Inhibited by zinc. Inhibited by the serine proteinase inhibitor 4-(2-aminoethyl)benzenesulphonyl fluoride (AEBSF), and by di-isopropylfluorophosphate. Specifically inhibited by isoindoline derivatives. Inhibited by Val-boroPro (Talabostat, PT-100), a non-selective inhibitor, which triggers pyroptosis in monocytes and macrophages. Functionally, dipeptidyl peptidase that cleaves off N-terminal dipeptides from proteins having a Pro or Ala residue at position 2. Acts as a key inhibitor of caspase-1-dependent monocyte and macrophage pyroptosis in resting cells by preventing activation of NLRP1 and CARD8. Sequesters the cleaved C-terminal part of NLRP1 and CARD8, which respectively constitute the active part of the NLRP1 and CARD8 inflammasomes, in a ternary complex, thereby preventing their oligomerization and activation. The dipeptidyl peptidase activity is required to suppress NLRP1 and CARD8; however, neither NLRP1 nor CARD8 are bona fide substrates of DPP8, suggesting the existence of substrate(s) required for NLRP1 and CARD8 inhibition. The sequence is that of Dipeptidyl peptidase 8 from Homo sapiens (Human).